We begin with the raw amino-acid sequence, 249 residues long: Green-light absorbing proteorhodopsin (249 aa).

The first 17 residues, 1–17, serve as a signal peptide directing secretion; it reads MKLLLILGSVIALPTFA. Helical transmembrane passes span 30-49, 62-84, 99-121, 128-147, 151-168, 189-211, and 221-243; these read GVSFWLVTAALLASTVFFFV, LTVSGLVTGIAFWHYMYMRGVWI, LLTVPLLICEFYLILAAATNVAG, LVGSLVMLVFGYMGEAGIMA, AFIIGCLAWVYMIYELWA, MMYIIIFGWAIYPVGYFTGYLMG, and LIYNLADFVNKILFGLIIWNVAV. Lysine 231 is modified (N6-(retinylidene)lysine).

It belongs to the archaeal/bacterial/fungal opsin family. Post-translationally, contains one covalently linked retinal chromophore.

Its subcellular location is the cell membrane. Light-driven proton pump that generates photothrophic energy. This is Green-light absorbing proteorhodopsin from Gamma-proteobacterium EBAC31A08.